The sequence spans 711 residues: Double-stranded RNA-specific editase 1 (711 aa).

The disordered stretch occupies residues 1–79 (MDIEDEENMS…RRKTPGPVLP (79 aa)). A compositionally biased stretch (basic residues) spans 63–73 (SKYRLKKRRKT). In terms of domain architecture, DRBM 1 spans 78-144 (LPKNALMQLN…AEKALRSFVQ (67 aa)). Interaction with substrate RNA stretches follow at residues 83–88 (LMQLNE) and 104–105 (VH). Residue Ser-149 is modified to Phosphoserine. Residues 176–220 (LFNGFETPDKSEPPFYVGSNGDDSFSSSGDVSLSASPVPASLTQP) form a disordered region. Residues 192 to 213 (VGSNGDDSFSSSGDVSLSASPV) are compositionally biased toward low complexity. The DRBM 2 domain occupies 231–298 (PSGKNPVMIL…AQSALATVFN (68 aa)). Interaction with substrate RNA regions lie at residues 237–242 (VMILNE) and His-259. The region spanning 370–707 (SVSTGTKCIN…VEKPTEQDQF (338 aa)) is the A to I editase domain. His-394 serves as a coordination point for Zn(2+). Glu-396 functions as the Proton donor in the catalytic mechanism. Residues Arg-400 and Arg-401 each coordinate 1D-myo-inositol hexakisphosphate. Zn(2+) is bound by residues Cys-451 and Cys-526. Residues Lys-529, Arg-532, Lys-639, Lys-672, Lys-682, and Lys-700 each coordinate 1D-myo-inositol hexakisphosphate.

Homodimer. Homodimerization is essential for its catalytic activity. Can form heterodimers with isoform 5 of ADAR/ADAR1. Requires 1D-myo-inositol hexakisphosphate as cofactor. In terms of tissue distribution, brain and peripheral tissues.

The protein localises to the nucleus. Its subcellular location is the nucleolus. The catalysed reaction is adenosine in double-stranded RNA + H2O + H(+) = inosine in double-stranded RNA + NH4(+). In terms of biological role, catalyzes the hydrolytic deamination of adenosine to inosine in double-stranded RNA (dsRNA) referred to as A-to-I RNA editing. This may affect gene expression and function in a number of ways that include mRNA translation by changing codons and hence the amino acid sequence of proteins; pre-mRNA splicing by altering splice site recognition sequences; RNA stability by changing sequences involved in nuclease recognition; genetic stability in the case of RNA virus genomes by changing sequences during viral RNA replication; and RNA structure-dependent activities such as microRNA production or targeting or protein-RNA interactions. Can edit both viral and cellular RNAs and can edit RNAs at multiple sites (hyper-editing) or at specific sites (site-specific editing). Its cellular RNA substrates include: bladder cancer-associated protein (BLCAP), neurotransmitter receptors for glutamate (GRIA2 and GRIK2) and serotonin (HTR2C), GABA receptor (GABRA3) and potassium voltage-gated channel (KCNA1). Site-specific RNA editing of transcripts encoding these proteins results in amino acid substitutions which consequently alter their functional activities. Edits GRIA2 at both the Q/R and R/G sites efficiently but converts the adenosine in hotspot1 much less efficiently. Can inhibit cell proliferation and migration and can stimulate exocytosis. The sequence is that of Double-stranded RNA-specific editase 1 (Adarb1) from Rattus norvegicus (Rat).